A 500-amino-acid chain; its full sequence is Maturase K (500 aa).

Belongs to the intron maturase 2 family. MatK subfamily.

The protein resides in the plastid. Its subcellular location is the chloroplast. Its function is as follows. Usually encoded in the trnK tRNA gene intron. Probably assists in splicing its own and other chloroplast group II introns. The polypeptide is Maturase K (Brasenia schreberi (Water shield)).